A 104-amino-acid chain; its full sequence is Large ribosomal subunit protein bL21 (104 aa).

Basic residues predominate over residues 81-90 (QGYRRHHGHR). Residues 81–104 (QGYRRHHGHRQPYTQVKITGISAG) form a disordered region.

This sequence belongs to the bacterial ribosomal protein bL21 family. As to quaternary structure, part of the 50S ribosomal subunit. Contacts protein L20.

This protein binds to 23S rRNA in the presence of protein L20. In Halorhodospira halophila (strain DSM 244 / SL1) (Ectothiorhodospira halophila (strain DSM 244 / SL1)), this protein is Large ribosomal subunit protein bL21.